Consider the following 977-residue polypeptide: Mineralocorticoid receptor (977 aa).

Over residues 1 to 19 the composition is skewed to basic and acidic residues; the sequence is METKGYHSRPEGLDMERRW. Disordered stretches follow at residues 1 to 37 and 231 to 288; these read METK…AERT and QGTP…VSSP. Residues 1–601 form a modulating region; it reads METKGYHSRP…STGSSRPSKI (601 aa). The segment covering 231 to 243 has biased composition (polar residues); sequence QGTPLTCSPTVDN. S250, S259, S283, S287, and S299 each carry phosphoserine. Low complexity predominate over residues 259–288; that stretch reads SPLSSPLSSMKSPISSPPSHCSVKSPVSSP. 2 disordered regions span residues 305 to 327 and 344 to 368; these read NSRC…SPAA and SGAS…KGAH. Zn(2+) contacts are provided by C602, C605, C619, C622, C638, C644, C654, and C657. 2 consecutive NR C4-type zinc fingers follow at residues 602-622 and 638-662; these read CLVC…CGSC and CAGR…LQKC. The nuclear receptor DNA-binding region spans 602–667; it reads CLVCGDGASG…RLQKCLQAGM (66 aa). Residues 668-718 form a hinge region; sequence NLGARKSKKLGKLKGLHEEQPQQPPPPQSPEEGTTYIAPAKEPSVNTALVP. The segment at 682–703 is disordered; sequence GLHEEQPQQPPPPQSPEEGTTY. One can recognise an NR LBD domain in the interval 719 to 957; the sequence is QLSSISRALT…EFPAMLVEII (239 aa). The 21-hydroxyprogesterone site is built by N763 and Q769. Aldosterone-binding residues include N763 and Q769. N763 and Q769 together coordinate progesterone. The tract at residues 775–778 is important for coactivator binding; the sequence is KWAK. 21-hydroxyprogesterone is bound by residues R810 and T938. The aldosterone site is built by R810 and T938. Progesterone-binding residues include R810 and T938.

This sequence belongs to the nuclear hormone receptor family. NR3 subfamily.

The protein localises to the cytoplasm. It is found in the nucleus. Its function is as follows. Receptor for both mineralocorticoids (MC) such as aldosterone and glucocorticoids (GC) such as corticosterone or cortisol. Binds to mineralocorticoid response elements (MRE) and transactivates target genes. The effect of MC is to increase ion and water transport and thus raise extracellular fluid volume and blood pressure and lower potassium levels. This chain is Mineralocorticoid receptor (NR3C2), found in Tupaia belangeri (Common tree shrew).